The chain runs to 564 residues: Pyruvate decarboxylase (564 aa).

Residues D28 and H115 each contribute to the pyruvate site. Residues T390 and 413 to 415 (GSI) contribute to the thiamine diphosphate site. Mg(2+) is bound at residue D444. Thiamine diphosphate contacts are provided by residues 445-446 (GS) and 471-476 (NDGYTI). Mg(2+) contacts are provided by N471 and G473. E477 is a pyruvate binding site.

The protein belongs to the TPP enzyme family. Homotetramer. Mg(2+) is required as a cofactor. It depends on thiamine diphosphate as a cofactor.

The catalysed reaction is a 2-oxocarboxylate + H(+) = an aldehyde + CO2. It catalyses the reaction pyruvate + H(+) = acetaldehyde + CO2. This is Pyruvate decarboxylase (PDC1) from Kluyveromyces marxianus (Yeast).